The following is a 539-amino-acid chain: Transcription factor LG2 (539 aa).

Over residues 115–125 (MRQQQQLHSGN) the composition is skewed to polar residues. Disordered stretches follow at residues 115-140 (MRQQ…SAQN) and 181-246 (KPGL…KSRL). Composition is skewed to low complexity over residues 126–137 (SQSVGSTTDSSS) and 192–205 (QQQH…QQQL). Residues 219-242 (TRKDGKSVDAKTERRLAQNREAAR) show a composition bias toward basic and acidic residues. The region spanning 227-271 (DAKTERRLAQNREAARKSRLRKKAYVQNLETSRVRLQQIEQELQR) is the bZIP domain. The basic motif stretch occupies residues 229 to 249 (KTERRLAQNREAARKSRLRKK). The segment at 255 to 269 (LETSRVRLQQIEQEL) is leucine-zipper. The region spanning 292 to 506 (AAMFDMEYAR…RALSNLWSSR (215 aa)) is the DOG1 domain. Residues 513-539 (GTESVSPTGTELQPMHNQPQQNQYSGF) form a disordered region.

It belongs to the bZIP family. Interacts with NPR1/NH1 and NPR3/NH3.

It localises to the nucleus. Functionally, transcriptional regulator involved in defense response. Acts as a transcriptional activator in vitro. This Oryza sativa subsp. japonica (Rice) protein is Transcription factor LG2.